The following is a 295-amino-acid chain: tRNA dimethylallyltransferase (295 aa).

11-18 (GPTVSGKS) contacts ATP. 13 to 18 (TVSGKS) serves as a coordination point for substrate. 2 interaction with substrate tRNA regions span residues 36–39 (DSMQ) and 158–162 (QRIIR).

This sequence belongs to the IPP transferase family. In terms of assembly, monomer. The cofactor is Mg(2+).

It catalyses the reaction adenosine(37) in tRNA + dimethylallyl diphosphate = N(6)-dimethylallyladenosine(37) in tRNA + diphosphate. Catalyzes the transfer of a dimethylallyl group onto the adenine at position 37 in tRNAs that read codons beginning with uridine, leading to the formation of N6-(dimethylallyl)adenosine (i(6)A). This is tRNA dimethylallyltransferase from Bartonella quintana (strain Toulouse) (Rochalimaea quintana).